The chain runs to 226 residues: Ribose-5-phosphate isomerase A (226 aa).

Substrate-binding positions include 26–29 (TGST), 82–85 (DGAD), and 95–98 (KGGG). Glu104 (proton acceptor) is an active-site residue. Lys122 lines the substrate pocket.

It belongs to the ribose 5-phosphate isomerase family. As to quaternary structure, homodimer.

The catalysed reaction is aldehydo-D-ribose 5-phosphate = D-ribulose 5-phosphate. The protein operates within carbohydrate degradation; pentose phosphate pathway; D-ribose 5-phosphate from D-ribulose 5-phosphate (non-oxidative stage): step 1/1. Catalyzes the reversible conversion of ribose-5-phosphate to ribulose 5-phosphate. The protein is Ribose-5-phosphate isomerase A of Streptococcus thermophilus (strain CNRZ 1066).